The sequence spans 881 residues: DNA mismatch repair protein MutS (881 aa).

632–639 (GPNMGGKS) lines the ATP pocket.

This sequence belongs to the DNA mismatch repair MutS family.

This protein is involved in the repair of mismatches in DNA. It is possible that it carries out the mismatch recognition step. This protein has a weak ATPase activity. This Chelativorans sp. (strain BNC1) protein is DNA mismatch repair protein MutS.